We begin with the raw amino-acid sequence, 664 residues long: Glycine--tRNA ligase beta subunit (664 aa).

The protein belongs to the class-II aminoacyl-tRNA synthetase family. Tetramer of two alpha and two beta subunits.

It localises to the cytoplasm. It carries out the reaction tRNA(Gly) + glycine + ATP = glycyl-tRNA(Gly) + AMP + diphosphate. The chain is Glycine--tRNA ligase beta subunit from Rickettsia conorii (strain ATCC VR-613 / Malish 7).